Consider the following 112-residue polypeptide: MALQDVVTREYTINLHKRLHGVNFKKRAPKAVKEIKKFATLHMGTTDVRLDPKLNIAIWKRGVQGVENRMRLRISRKRNDEEDAKEKLFAYVEPVIVPSTKGLQTVVVEDDE.

Belongs to the eukaryotic ribosomal protein eL31 family. In terms of assembly, component of the large ribosomal subunit. Mature ribosomes consist of a small (40S) and a large (60S) subunit. The 40S subunit contains about 32 different proteins and 1 molecule of RNA (18S). The 60S subunit contains 45 different proteins and 3 molecules of RNA (25S, 5.8S and 5S).

It is found in the cytoplasm. Component of the ribosome, a large ribonucleoprotein complex responsible for the synthesis of proteins in the cell. The small ribosomal subunit (SSU) binds messenger RNAs (mRNAs) and translates the encoded message by selecting cognate aminoacyl-transfer RNA (tRNA) molecules. The large subunit (LSU) contains the ribosomal catalytic site termed the peptidyl transferase center (PTC), which catalyzes the formation of peptide bonds, thereby polymerizing the amino acids delivered by tRNAs into a polypeptide chain. The nascent polypeptides leave the ribosome through a tunnel in the LSU and interact with protein factors that function in enzymatic processing, targeting, and the membrane insertion of nascent chains at the exit of the ribosomal tunnel. In Candida albicans (strain SC5314 / ATCC MYA-2876) (Yeast), this protein is Large ribosomal subunit protein eL31.